We begin with the raw amino-acid sequence, 267 residues long: Neuferricin (267 aa).

Positions 1-17 (MLKYLVALISMVLAVWT) are cleaved as a signal peptide. The region spanning 53-150 (LLTKEQLSLY…RDYTPVGKLI (98 aa)) is the Cytochrome b5 heme-binding domain.

It belongs to the cytochrome b5 family. MAPR subfamily.

Its subcellular location is the secreted. In terms of biological role, heme-binding protein which promotes neuronal but not astrocyte differentiation. This is Neuferricin (cyb5d2) from Danio rerio (Zebrafish).